The sequence spans 453 residues: Ribulose bisphosphate carboxylase large chain (453 aa).

Positions 1–2 (MS) are excised as a propeptide. P3 is modified (N-acetylproline). N6,N6,N6-trimethyllysine is present on K14. Positions 123 and 173 each coordinate substrate. The Proton acceptor role is filled by K175. Position 177 (K177) interacts with substrate. Mg(2+) contacts are provided by K201, D203, and E204. An N6-carboxylysine modification is found at K201. H294 functions as the Proton acceptor in the catalytic mechanism. Substrate-binding residues include R295, H327, and S379.

This sequence belongs to the RuBisCO large chain family. Type I subfamily. Heterohexadecamer of 8 large chains and 8 small chains; disulfide-linked. The disulfide link is formed within the large subunit homodimers. Mg(2+) is required as a cofactor. In terms of processing, the disulfide bond which can form in the large chain dimeric partners within the hexadecamer appears to be associated with oxidative stress and protein turnover.

It localises to the plastid. Its subcellular location is the chloroplast. The catalysed reaction is 2 (2R)-3-phosphoglycerate + 2 H(+) = D-ribulose 1,5-bisphosphate + CO2 + H2O. It catalyses the reaction D-ribulose 1,5-bisphosphate + O2 = 2-phosphoglycolate + (2R)-3-phosphoglycerate + 2 H(+). In terms of biological role, ruBisCO catalyzes two reactions: the carboxylation of D-ribulose 1,5-bisphosphate, the primary event in carbon dioxide fixation, as well as the oxidative fragmentation of the pentose substrate in the photorespiration process. Both reactions occur simultaneously and in competition at the same active site. The sequence is that of Ribulose bisphosphate carboxylase large chain from Galium album (White bedstraw).